The sequence spans 581 residues: Arginine--tRNA ligase (581 aa).

Residues Pro-126 to His-136 carry the 'HIGH' region motif.

Belongs to the class-I aminoacyl-tRNA synthetase family. As to quaternary structure, monomer.

The protein resides in the cytoplasm. The catalysed reaction is tRNA(Arg) + L-arginine + ATP = L-arginyl-tRNA(Arg) + AMP + diphosphate. The sequence is that of Arginine--tRNA ligase from Shewanella oneidensis (strain ATCC 700550 / JCM 31522 / CIP 106686 / LMG 19005 / NCIMB 14063 / MR-1).